The primary structure comprises 379 residues: Probable RNA methyltransferase RB6963 (379 aa).

Glu-89 functions as the Proton acceptor in the catalytic mechanism. A Radical SAM core domain is found at 96–332 (ATGRTTLCVS…VRYSLGNDIE (237 aa)). A disulfide bridge links Cys-103 with Cys-335. [4Fe-4S] cluster is bound by residues Cys-110, Cys-114, and Cys-117. Residues 160-161 (GE), Ser-192, 215-217 (SLH), and Asn-291 each bind S-adenosyl-L-methionine. Cys-335 acts as the S-methylcysteine intermediate in catalysis.

It belongs to the radical SAM superfamily. RlmN family. [4Fe-4S] cluster is required as a cofactor.

It localises to the cytoplasm. This chain is Probable RNA methyltransferase RB6963, found in Rhodopirellula baltica (strain DSM 10527 / NCIMB 13988 / SH1).